Consider the following 120-residue polypeptide: U13-lycotoxin-Ls1c (120 aa).

Residues 1 to 16 (MKILFVLISILYAVYC) form the signal peptide. Residues 17-54 (FSSEEDVDSAYLANELEPVEDINSEQYAALEPKEEQER) constitute a propeptide that is removed on maturation. Cystine bridges form between C56/C70, C69/C87, and C78/C85. The Agouti domain maps to 56–95 (CADMGQDRKDDCDCCLNIATCNCWFGRYFCSCTFGDYQTC).

This sequence belongs to the neurotoxin 05 (agouti) family. In terms of processing, contains 5 disulfide bonds. Expressed by the venom gland.

It localises to the secreted. This is U13-lycotoxin-Ls1c from Lycosa singoriensis (Wolf spider).